Consider the following 258-residue polypeptide: Snake venom serine protease HS114 (258 aa).

The first 18 residues, 1–18 (MVLVRVVANLLILQLSYA), serve as a signal peptide directing secretion. The propeptide occupies 19-24 (QKVSEL). The region spanning 25-249 (VVGGDECNIN…YNTWIESVIA (225 aa)) is the Peptidase S1 domain. Cystine bridges form between Cys-31–Cys-163, Cys-50–Cys-66, Cys-98–Cys-256, Cys-142–Cys-210, Cys-174–Cys-189, and Cys-200–Cys-225. N-linked (GlcNAc...) asparagine glycosylation is present at Asn-44. Active-site charge relay system residues include His-65 and Asp-110. The Charge relay system role is filled by Ser-204.

Belongs to the peptidase S1 family. Snake venom subfamily. Monomer. N-glycosylated. Contains approximately 10% carbohydrates. Expressed by the venom gland.

It is found in the secreted. Inhibited by benzamidine, PMSF, leupeptin, SDS and DTT, but not by EDTA, and commercial antivenom. In terms of biological role, snake venom serine protease that shows non-specific action on fibrinogen. It preferentially degrades fibrinogen Aalpha (FGA), releasing fibrinopeptide A, and shows a lower activity on fibrinogen Bbeta (FGB), releasing fibrinopeptide B and other uncommon fibrinopeptides. Also shows low fibrinolytic activity compared to plasmin. Has high enzymatic activity on the substrates for activated protein C and factor XIa, and for thrombin. Shows a wide activity spectrum at different peptide sequences, with a preferential cleavage at Lys-|-Xaa over Arg-|-Xaa bonds. This is Snake venom serine protease HS114 from Bothrops jararaca (Jararaca).